The primary structure comprises 245 residues: Gem-associated protein 2 (245 aa).

The protein belongs to the gemin-2 family. Component of the core survival motor neuron (SMN) complex composed of Smn, Gem2, Gem3, rig/Gem5 and one of 3 almost identical Gem4 paralogs encoded by Glos/Gem4a, Gem4b or Gem4c. Part of a minimal SMN complex composed of Smn and Gem2 only; this complex is active in UsnRNP assembly. The SMN complex associates with the entire set of spliceosomal snRNP Sm proteins, SmB, SmD1, SmD2, SmD3, SmE, SmF and SmG, and with the snRNP-specific proteins snRNP-U1-70K, U2A, snf/U1A and U5-116KD. As to expression, expressed in nurse cells and oocytes.

Its subcellular location is the cytoplasm. It localises to the U-body. Functionally, component of the survival motor neuron (SMN) complex that catalyzes the assembly of small nuclear ribonucleoproteins (snRNPs), the building blocks of the spliceosome, and thereby plays an important role in the splicing of cellular pre-mRNAs. Most spliceosomal snRNPs contain a common set of Sm proteins SNRPB, SNRPD1, SNRPD2, SNRPD3, SNRPE, SNRPF and SNRPG that assemble in a heptameric protein ring on the Sm site of the small nuclear RNA to form the core snRNP (Sm core). In the cytosol, the Sm proteins SNRPD1, SNRPD2, SNRPE, SNRPF and SNRPG (5Sm) are trapped in an inactive 6S pICln-Sm complex by the chaperone CLNS1A that controls the assembly of the core snRNP. To assemble core snRNPs, the SMN complex accepts the trapped 5Sm proteins from CLNS1A. Binding of snRNA inside 5Sm ultimately triggers eviction of the SMN complex, thereby allowing binding of SNRPD3 and SNRPB to complete assembly of the core snRNP. Within the SMN complex, GEMIN2 constrains the conformation of 5Sm, thereby promoting 5Sm binding to snRNA containing the snRNP code (a nonameric Sm site and a 3'-adjacent stem-loop), thus preventing progression of assembly until a cognate substrate is bound. Involved in adult motor function. The polypeptide is Gem-associated protein 2 (Drosophila melanogaster (Fruit fly)).